The following is a 512-amino-acid chain: Choline-sulfatase (512 aa).

3 residues coordinate Ca(2+): aspartate 14, glutamine 15, and cysteine 54. Cysteine 54 acts as the Nucleophile in catalysis. At cysteine 54 the chain carries 3-oxoalanine (Cys). Residue histidine 104 is part of the active site. Ca(2+) contacts are provided by aspartate 296 and histidine 297.

It belongs to the sulfatase family. The cofactor is Ca(2+). Post-translationally, the conversion to 3-oxoalanine (also known as C-formylglycine, FGly), of a serine or cysteine residue in prokaryotes and of a cysteine residue in eukaryotes, is critical for catalytic activity.

The enzyme catalyses choline sulfate + H2O = choline + sulfate + H(+). The protein operates within amine and polyamine biosynthesis; choline biosynthesis; choline from choline sulfate: step 1/1. Converts choline-O-sulfate into choline. The chain is Choline-sulfatase (betC) from Rhizobium meliloti (strain 1021) (Ensifer meliloti).